Consider the following 251-residue polypeptide: Triosephosphate isomerase (251 aa).

Residue 9–11 (NWK) participates in substrate binding. Residue His95 is the Electrophile of the active site. Glu167 functions as the Proton acceptor in the catalytic mechanism. Residues Gly173, Ser213, and 234–235 (GG) contribute to the substrate site. Ser213 carries the phosphoserine modification.

Belongs to the triosephosphate isomerase family. As to quaternary structure, homodimer.

It is found in the cytoplasm. It carries out the reaction D-glyceraldehyde 3-phosphate = dihydroxyacetone phosphate. It functions in the pathway carbohydrate biosynthesis; gluconeogenesis. The protein operates within carbohydrate degradation; glycolysis; D-glyceraldehyde 3-phosphate from glycerone phosphate: step 1/1. Functionally, involved in the gluconeogenesis. Catalyzes stereospecifically the conversion of dihydroxyacetone phosphate (DHAP) to D-glyceraldehyde-3-phosphate (G3P). This is Triosephosphate isomerase from Bacillus anthracis.